We begin with the raw amino-acid sequence, 249 residues long: tRNA (guanine-N(1)-)-methyltransferase (249 aa).

S-adenosyl-L-methionine is bound by residues Gly-118 and 138-143 (IGDYVL).

It belongs to the RNA methyltransferase TrmD family. In terms of assembly, homodimer.

Its subcellular location is the cytoplasm. The catalysed reaction is guanosine(37) in tRNA + S-adenosyl-L-methionine = N(1)-methylguanosine(37) in tRNA + S-adenosyl-L-homocysteine + H(+). Its function is as follows. Specifically methylates guanosine-37 in various tRNAs. The protein is tRNA (guanine-N(1)-)-methyltransferase of Alkaliphilus oremlandii (strain OhILAs) (Clostridium oremlandii (strain OhILAs)).